Reading from the N-terminus, the 185-residue chain is Ribosome-recycling factor (185 aa).

Belongs to the RRF family.

It is found in the cytoplasm. Responsible for the release of ribosomes from messenger RNA at the termination of protein biosynthesis. May increase the efficiency of translation by recycling ribosomes from one round of translation to another. This is Ribosome-recycling factor from Laribacter hongkongensis (strain HLHK9).